The sequence spans 262 residues: Transmembrane and immunoglobulin domain-containing protein 1 (262 aa).

An N-terminal signal peptide occupies residues 1–29 (MAWKSSVIMQMGRFLLLVILFLPREMTSS). The 85-residue stretch at 30–114 (VLTVNGKTEN…LGRDQSVSVS (85 aa)) folds into the Ig-like C2-type 1 domain. Residues 30–220 (VLTVNGKTEN…IVKDKTVGVP (191 aa)) lie on the Extracellular side of the membrane. An intrachain disulfide couples C54 to C103. Residues N58, N83, N118, N158, and N190 are each glycosylated (N-linked (GlcNAc...) asparagine). Residues 122–207 (PPLLSGNDFQ…KSSLKTESLD (86 aa)) enclose the Ig-like C2-type 2 domain. The cysteines at positions 143 and 195 are disulfide-linked. The helical transmembrane segment at 221 to 241 (IEPIIAACVVIFLTLCFGLIA) threads the bilayer. Residues 242 to 262 (RRKKIMKLCMKDKDPHSETAL) are Cytoplasmic-facing.

In terms of assembly, homodimer. In terms of processing, N-glycosylated.

Its subcellular location is the cell membrane. The protein resides in the cytoplasm. Its function is as follows. May control cell-cell adhesion, cell migration and proliferation, cell morphology, and protects renal epithelial cells from oxidative cell injury to promote cell survival. This chain is Transmembrane and immunoglobulin domain-containing protein 1, found in Homo sapiens (Human).